The primary structure comprises 757 residues: Catalase-peroxidase (757 aa).

A disordered region spans residues 1–28; the sequence is MENQSNDISKCPFHNGSMDNQAASGTKN. Residues 17–28 are compositionally biased toward polar residues; it reads SMDNQAASGTKN. The segment at residues 100–247 is a cross-link (tryptophyl-tyrosyl-methioninium (Trp-Tyr) (with M-273)); sequence WHSAGTYRVH…LAAVQMGLIY (148 aa). His-101 serves as the catalytic Proton acceptor. Residues 247–273 constitute a cross-link (tryptophyl-tyrosyl-methioninium (Tyr-Met) (with W-100)); the sequence is YVNPEGPDGNPDPILAAKDIRDTFGRM. His-288 is a heme b binding site.

This sequence belongs to the peroxidase family. Peroxidase/catalase subfamily. As to quaternary structure, homodimer or homotetramer. Heme b serves as cofactor. Post-translationally, formation of the three residue Trp-Tyr-Met cross-link is important for the catalase, but not the peroxidase activity of the enzyme.

The enzyme catalyses H2O2 + AH2 = A + 2 H2O. The catalysed reaction is 2 H2O2 = O2 + 2 H2O. Its function is as follows. Bifunctional enzyme with both catalase and broad-spectrum peroxidase activity. This chain is Catalase-peroxidase, found in Flavobacterium johnsoniae (strain ATCC 17061 / DSM 2064 / JCM 8514 / BCRC 14874 / CCUG 350202 / NBRC 14942 / NCIMB 11054 / UW101) (Cytophaga johnsonae).